We begin with the raw amino-acid sequence, 840 residues long: E3 ubiquitin-protein ligase SH3RF1 (840 aa).

An RING-type zinc finger spans residues 12–53 (CPVCLERLDASAKVLPCQHTFCKRCLLGIVGSRNELRCPECR). Residues 105 to 129 (VTCSPKDGPSSQGGPQPRAQAWSPP) are disordered. SH3 domains lie at 134–193 (PQLP…IIKP) and 196–259 (QPPP…FNSA). Disordered regions lie at residues 267-324 (DQPP…RHSM), 394-442 (TLNP…PRPS), 516-545 (GPAS…VAGG), 578-633 (QARS…AASG), 652-723 (AASL…LGAE), and 744-773 (MAPG…SLGP). Residues 273–282 (GVAAGEGALA) are compositionally biased toward low complexity. The segment covering 283–292 (TTPSSTTTKQ) has biased composition (polar residues). The tract at residues 292–362 (QPDGKKNTKK…APSQVHISTT (71 aa)) is interaction with RAC1. At Ser304 the chain carries Phosphoserine. Low complexity-rich tracts occupy residues 307 to 320 (SLSM…AAQQ) and 405 to 424 (QAAT…GPRP). An interaction with AKT2 region spans residues 434-537 (HPRPQPRPSV…PSTGGPAQKP (104 aa)). Residues 439–500 (PRPSVYVAIY…PGNYVAPVTR (62 aa)) form the SH3 3 domain. The span at 616–625 (SPQPPAPLGP) shows a compositional bias: pro residues. The span at 681–692 (RPDKDGKKEKKG) shows a compositional bias: basic and acidic residues. Ser709 bears the Phosphoserine mark. The region spanning 781–840 (AVCERHRVVVSYPPQSEAELELKEGDIVFVHKKREDGWFKGTLQRNGKTGLFPGSFVENI) is the SH3 4 domain.

It belongs to the SH3RF family. Interacts with RAC1; in a GTP-dependent manner. Interacts with MAP3K10/MLK2 and MAP3K11/MLK3. Interacts with MAPK8IP; this interaction leads to the PJAC complex (POSH-JIP or SH3RF1/MAPK8IP apoptotic complex) with a 1:1 ratio. Interacts with SIAH1. Interacts with HERP1. Probably part of a signaling complex that may contain SH3RF1, MAPK8IP, DLK1, MAP2K4/MKK4, MAP2K7/MKK7, MAPK8/JNK1, MAPK9/JNK2, AKT1 and AKT2. Found in a complex with RAC2, MAP3K7/TAK1, MAP2K7/MKK7, MAPK8IP1/JIP1, MAPK8/JNK1 and MAPK9/JNK2. Found in a complex with RAC1, MAP3K11/MLK3, MAP2K7/MKK7, MAPK8IP1/JIP1 and MAPK8/JNK1. Interacts with SH3RF2. In terms of processing, phosphorylated at Ser-304 by AKT1 and AKT2. When phosphorylated, it has reduced ability to bind Rac. Post-translationally, autoubiquitinated. Ubiquitinated by SH3RF2, leading to proteasome-mediated degradation.

It localises to the cytoplasm. The protein resides in the perinuclear region. It is found in the cell projection. The protein localises to the lamellipodium. Its subcellular location is the golgi apparatus. It localises to the trans-Golgi network. It catalyses the reaction S-ubiquitinyl-[E2 ubiquitin-conjugating enzyme]-L-cysteine + [acceptor protein]-L-lysine = [E2 ubiquitin-conjugating enzyme]-L-cysteine + N(6)-ubiquitinyl-[acceptor protein]-L-lysine.. Its pathway is protein modification; protein ubiquitination. In terms of biological role, has E3 ubiquitin-protein ligase activity. In the absence of an external substrate, it can catalyze self-ubiquitination. Stimulates ubiquitination of potassium channel KCNJ1, enhancing it's dynamin-dependent and clathrin-independent endocytosis. Acts as a scaffold protein that coordinates with MAPK8IP1/JIP1 in organizing different components of the JNK pathway, including RAC1 or RAC2, MAP3K11/MLK3 or MAP3K7/TAK1, MAP2K7/MKK7, MAPK8/JNK1 and/or MAPK9/JNK2 into a functional multiprotein complex to ensure the effective activation of the JNK signaling pathway. Regulates the differentiation of CD4(+) and CD8(+) T-cells and promotes T-helper 1 (Th1) cell differentiation. Regulates the activation of MAPK8/JNK1 and MAPK9/JNK2 in CD4(+) T-cells and the activation of MAPK8/JNK1 in CD8(+) T-cells. Plays a crucial role in the migration of neocortical neurons in the developing brain. Controls proper cortical neuronal migration and the formation of proximal cytoplasmic dilation in the leading process (PCDLP) in migratory neocortical neurons by regulating the proper localization of activated RAC1 and F-actin assembly. This Bos taurus (Bovine) protein is E3 ubiquitin-protein ligase SH3RF1 (SH3RF1).